The following is a 518-amino-acid chain: Two-component response regulator-like PRR1 (518 aa).

The Response regulatory domain maps to 29 to 147; the sequence is RILLCDSDPS…ELLNLWTHVW (119 aa). 3 disordered regions span residues 172–241, 266–305, and 483–518; these read PSDA…PGVM, TPTT…GTDV, and VRQA…SSPE. Over residues 196 to 212 the composition is skewed to polar residues; sequence NQETSTSNQHEYESNPS. The CCT domain maps to 443–485; sequence RAAALAKFRLKRKERCFDKKVRYVNRKKLAETRPRVRGQFVRQ.

Belongs to the ARR-like family. Interacts with PIL13. Interacts with PIL15.

It localises to the nucleus. Controls photoperiodic flowering response. Seems to be one of the component of the circadian clock. Expression of several members of the ARR-like family is controlled by circadian rhythm. The particular coordinated sequential expression of PRR73, PRR37, PRR95, PRR59 and PPR1 result to circadian waves that may be at the basis of the endogenous circadian clock. The sequence is that of Two-component response regulator-like PRR1 (PRR1) from Oryza sativa subsp. japonica (Rice).